The sequence spans 320 residues: Putative protein FRMPD2-like (320 aa).

2 consecutive PDZ domains span residues 1-46 (MTSI…ERRV) and 90-178 (EVKL…CRPP). The interval 215 to 239 (DQEDSWRDSASPDAGEGLGLRPESS) is disordered.

The sequence is that of Putative protein FRMPD2-like from Homo sapiens (Human).